The following is an 833-amino-acid chain: Leucine--tRNA ligase (833 aa).

Positions Pro41–His52 match the 'HIGH' region motif. The 'KMSKS' region motif lies at Lys610–Ser614. Lys613 is a binding site for ATP.

The protein belongs to the class-I aminoacyl-tRNA synthetase family.

It is found in the cytoplasm. It carries out the reaction tRNA(Leu) + L-leucine + ATP = L-leucyl-tRNA(Leu) + AMP + diphosphate. The sequence is that of Leucine--tRNA ligase from Streptococcus pneumoniae serotype 2 (strain D39 / NCTC 7466).